Consider the following 235-residue polypeptide: Octanoyltransferase (235 aa).

In terms of domain architecture, BPL/LPL catalytic spans 28–203; sequence GRAEETLLLL…PFAGLPADAL (176 aa). Residues 66–73, 133–135, and 146–148 each bind substrate; these read RGGDVTWH, SIG, and GFA. Cys164 serves as the catalytic Acyl-thioester intermediate. Positions 202-235 are disordered; it reads ALPEQPRDAVQPSSCDDVHAPSTTSRRPPCPLTV.

This sequence belongs to the LipB family.

It is found in the cytoplasm. It catalyses the reaction octanoyl-[ACP] + L-lysyl-[protein] = N(6)-octanoyl-L-lysyl-[protein] + holo-[ACP] + H(+). The protein operates within protein modification; protein lipoylation via endogenous pathway; protein N(6)-(lipoyl)lysine from octanoyl-[acyl-carrier-protein]: step 1/2. Functionally, catalyzes the transfer of endogenously produced octanoic acid from octanoyl-acyl-carrier-protein onto the lipoyl domains of lipoate-dependent enzymes. Lipoyl-ACP can also act as a substrate although octanoyl-ACP is likely to be the physiological substrate. This Geobacter sulfurreducens (strain ATCC 51573 / DSM 12127 / PCA) protein is Octanoyltransferase.